Reading from the N-terminus, the 436-residue chain is Prenyltransferase nscD (436 aa).

The protein belongs to the tryptophan dimethylallyltransferase family.

The protein operates within secondary metabolite biosynthesis. Its function is as follows. Prenyltransferase; part of the gene cluster that mediates the biosynthesis of neosartoricin B, a prenylated anthracenone that probably exhibits T-cell antiproliferative activity, suggestive of a physiological role as an immunosuppressive agent. The non-reducing polyketide synthase nscA probably synthesizes and cyclizes the decaketide backbone. The hydrolase nscB then mediates the product release through hydrolysis followed by spontaneous decarboxylation. The prenyltransferase nscD catalyzes the addition of the dimethylallyl group to the aromatic C5. The FAD-dependent monooxygenase nscC is then responsible for the stereospecific hydroxylation at C2. Neosartoricin B can be converted into two additional compounds neosartoricins C and D. Neosartoricin C is a spirocyclic compound that is cyclized through the attack of C3 hydroxyl on C14, followed by dehydration. On the other hand, neosartoricin D is a further cyclized compound in which attack of C2 on C14 in neosartoricin C results in the formation of the acetal-containing dioxabicyclo-octanone ring. Both of these compounds are novel and possibly represent related metabolites of the gene cluster. This Trichophyton equinum (strain ATCC MYA-4606 / CBS 127.97) (Horse ringworm fungus) protein is Prenyltransferase nscD.